Here is a 133-residue protein sequence, read N- to C-terminus: Small ribosomal subunit protein uS8 (133 aa).

The protein belongs to the universal ribosomal protein uS8 family. Part of the 30S ribosomal subunit. Contacts proteins S5 and S12.

One of the primary rRNA binding proteins, it binds directly to 16S rRNA central domain where it helps coordinate assembly of the platform of the 30S subunit. This chain is Small ribosomal subunit protein uS8, found in Synechococcus sp. (strain WH7803).